Consider the following 91-residue polypeptide: MKVSATAFAVLLMAAALCAPASASPYASDTTPCCFAYISRPLPRTHVQEYFYTSSKCSMAAVVFITRKNRQVCANPEKKWVREYINALELS.

Residues 1–23 (MKVSATAFAVLLMAAALCAPASA) form the signal peptide. Intrachain disulfides connect Cys-33/Cys-57 and Cys-34/Cys-73.

Belongs to the intercrine beta (chemokine CC) family.

Its subcellular location is the secreted. In terms of biological role, chemoattractant for blood monocytes, memory T-helper cells and eosinophils. Causes the release of histamine from basophils and activates eosinophils. May activate several chemokine receptors including CCR1, CCR3, CCR4 and CCR5. May also be an agonist of the G protein-coupled receptor GPR75. Together with GPR75, may play a role in neuron survival through activation of a downstream signaling pathway involving the PI3, Akt and MAP kinases. By activating GPR75 may also play a role in insulin secretion by islet cells. This chain is C-C motif chemokine 5 (CCL5), found in Bos taurus (Bovine).